Reading from the N-terminus, the 246-residue chain is MyoD family inhibitor domain-containing protein (246 aa).

Positions 1–71 (MSGAGEALAP…WGNPSDGELI (71 aa)) are disordered. The segment covering 33 to 43 (KCDKDNTEKDI) has biased composition (basic and acidic residues). A compositionally biased stretch (polar residues) spans 44–63 (TQATNSHFTHGEMQDQSIWG). The MDFI domain maps to 74–246 (QPQRLPQLQT…MECCGICFPS (173 aa)). S128, S140, and S143 each carry phosphoserine.

Belongs to the MDFI family. In terms of assembly, interacts with HAND1; the interaction sequesters HAND1 into the nucleolus and inhibits its activity. Interacts (via C-terminus) with ZIC2. Interacts (via C-terminus) with AXIN1, the histidine-rich region of CCNT1/cyclin-T and weakly with LEF1. Interacts with CCNT2. Interacts with GATA2. Interacts (via C-terminus) with Piezo channel composed of PIEZO1 or PIEZO2; the interaction prolongs Piezo channel inactivation. As to quaternary structure, (Microbial infection) Interacts (via C-terminus) with HIV-1 Tat and Rev. In terms of processing, palmitoylated. Expressed in lymphatic tissues. Detected in the spleen, thymus, peripheral blood leukocytes as well as prostate, uterus and small intestine. Expressed in lymphatic endothelial cells.

The protein resides in the nucleus. Its subcellular location is the nucleolus. It localises to the cytoplasm. It is found in the secreted. Functionally, required to control the activity of various transcription factors through their sequestration in the cytoplasm. Retains nuclear Zic proteins ZIC1, ZIC2 and ZIC3 in the cytoplasm and inhibits their transcriptional activation. Modulates the expression from cellular promoters. Binds to the axin complex, resulting in an increase in the level of free beta-catenin. Affects axin regulation of the WNT and JNK signaling pathways. Involved in the development of lymphatic vessel valves. Required to promote lymphatic endothelial cell migration, in a process that involves down-regulation of integrin beta 1 activation and control of cell adhesion to the extracellular matrix. Regulates the activity of mechanosensitive Piezo channel. In terms of biological role, (Microbial infection) Modulates the expression from viral promoters. Down-regulates Tat-dependent transcription of the human immunodeficiency virus type 1 (HIV-1) LTR by interacting with HIV-1 Tat and Rev and impairing their nuclear import, probably by rendering the NLS domains inaccessible to importin-beta. Also stimulates activation of human T-cell leukemia virus type I (HTLV-I) LTR. In Homo sapiens (Human), this protein is MyoD family inhibitor domain-containing protein.